A 191-amino-acid polypeptide reads, in one-letter code: Cytochrome c biogenesis ATP-binding export protein CcmA (191 aa).

An ABC transporter domain is found at 6–189; it reads LVATDIACRR…RVRTLAIRNF (184 aa). Residue 38-45 coordinates ATP; the sequence is GANGIGKS.

It belongs to the ABC transporter superfamily. CcmA exporter (TC 3.A.1.107) family. As to quaternary structure, the complex is composed of two ATP-binding proteins (CcmA) and two transmembrane proteins (CcmB).

The protein localises to the cell inner membrane. It carries out the reaction heme b(in) + ATP + H2O = heme b(out) + ADP + phosphate + H(+). Its function is as follows. Part of the ABC transporter complex CcmAB involved in the biogenesis of c-type cytochromes; once thought to export heme, this seems not to be the case, but its exact role is uncertain. Responsible for energy coupling to the transport system. This Novosphingobium aromaticivorans (strain ATCC 700278 / DSM 12444 / CCUG 56034 / CIP 105152 / NBRC 16084 / F199) protein is Cytochrome c biogenesis ATP-binding export protein CcmA.